Here is a 354-residue protein sequence, read N- to C-terminus: 3-dehydroquinate synthase (354 aa).

Residues 61-66, 119-120, Lys132, Lys141, and 159-162 each bind NAD(+); these read DGESTK, TT, and FLET. Glu174, His238, and His254 together coordinate Zn(2+).

This sequence belongs to the sugar phosphate cyclases superfamily. Dehydroquinate synthase family. The cofactor is NAD(+). Co(2+) is required as a cofactor. Requires Zn(2+) as cofactor.

The protein localises to the cytoplasm. The catalysed reaction is 7-phospho-2-dehydro-3-deoxy-D-arabino-heptonate = 3-dehydroquinate + phosphate. The protein operates within metabolic intermediate biosynthesis; chorismate biosynthesis; chorismate from D-erythrose 4-phosphate and phosphoenolpyruvate: step 2/7. In terms of biological role, catalyzes the conversion of 3-deoxy-D-arabino-heptulosonate 7-phosphate (DAHP) to dehydroquinate (DHQ). In Saccharolobus solfataricus (strain ATCC 35092 / DSM 1617 / JCM 11322 / P2) (Sulfolobus solfataricus), this protein is 3-dehydroquinate synthase.